The primary structure comprises 445 residues: Probable carboxypeptidase UREG_07869 (445 aa).

The N-terminal stretch at M1–C17 is a signal peptide. D165 contributes to the Zn(2+) binding site. Catalysis depends on E197, which acts as the Proton acceptor. E198 contacts Zn(2+).

This sequence belongs to the peptidase M20A family. The cofactor is Zn(2+).

The protein localises to the secreted. The chain is Probable carboxypeptidase UREG_07869 from Uncinocarpus reesii (strain UAMH 1704).